The sequence spans 295 residues: Ethanolamine ammonia-lyase small subunit (295 aa).

Positions 207, 228, and 258 each coordinate adenosylcob(III)alamin.

The protein belongs to the EutC family. The basic unit is a heterodimer which dimerizes to form tetramers. The heterotetramers trimerize; 6 large subunits form a core ring with 6 small subunits projecting outwards. Requires adenosylcob(III)alamin as cofactor.

Its subcellular location is the bacterial microcompartment. It carries out the reaction ethanolamine = acetaldehyde + NH4(+). The protein operates within amine and polyamine degradation; ethanolamine degradation. Catalyzes the deamination of various vicinal amino-alcohols to oxo compounds. Allows this organism to utilize ethanolamine as the sole source of nitrogen and carbon in the presence of external vitamin B12. The chain is Ethanolamine ammonia-lyase small subunit from Escherichia coli O157:H7.